The sequence spans 82 residues: ATP synthase subunit c (82 aa).

2 helical membrane-spanning segments follow: residues 6–26 and 49–69; these read LGLT…GCGI and IMVT…YALV.

This sequence belongs to the ATPase C chain family. In terms of assembly, F-type ATPases have 2 components, F(1) - the catalytic core - and F(0) - the membrane proton channel. F(1) has five subunits: alpha(3), beta(3), gamma(1), delta(1), epsilon(1). F(0) has three main subunits: a(1), b(2) and c(10-14). The alpha and beta chains form an alternating ring which encloses part of the gamma chain. F(1) is attached to F(0) by a central stalk formed by the gamma and epsilon chains, while a peripheral stalk is formed by the delta and b chains.

It is found in the cell inner membrane. Its function is as follows. F(1)F(0) ATP synthase produces ATP from ADP in the presence of a proton or sodium gradient. F-type ATPases consist of two structural domains, F(1) containing the extramembraneous catalytic core and F(0) containing the membrane proton channel, linked together by a central stalk and a peripheral stalk. During catalysis, ATP synthesis in the catalytic domain of F(1) is coupled via a rotary mechanism of the central stalk subunits to proton translocation. In terms of biological role, key component of the F(0) channel; it plays a direct role in translocation across the membrane. A homomeric c-ring of between 10-14 subunits forms the central stalk rotor element with the F(1) delta and epsilon subunits. The sequence is that of ATP synthase subunit c from Nitratidesulfovibrio vulgaris (strain ATCC 29579 / DSM 644 / CCUG 34227 / NCIMB 8303 / VKM B-1760 / Hildenborough) (Desulfovibrio vulgaris).